Here is a 543-residue protein sequence, read N- to C-terminus: CTP synthase (543 aa).

The segment at 1 to 265 (MTRFVFITGG…DTEVLRHFGL (265 aa)) is amidoligase domain. Ser13 contributes to the CTP binding site. Position 13 (Ser13) interacts with UTP. An ATP-binding site is contributed by 14–19 (SLGKGI). L-glutamine is bound at residue Tyr54. ATP is bound at residue Asp71. Residues Asp71 and Glu139 each contribute to the Mg(2+) site. Residues 146-148 (DIE), 186-191 (KTKPTQ), and Lys222 each bind CTP. UTP contacts are provided by residues 186 to 191 (KTKPTQ) and Lys222. The region spanning 291 to 542 (RIAVVGKYTA…VGAAVKKMRL (252 aa)) is the Glutamine amidotransferase type-1 domain. Residue Gly354 participates in L-glutamine binding. Cys381 (nucleophile; for glutamine hydrolysis) is an active-site residue. Residues 382 to 385 (FGMQ), Glu405, and Arg470 each bind L-glutamine. Residues His515 and Glu517 contribute to the active site.

The protein belongs to the CTP synthase family. In terms of assembly, homotetramer.

It carries out the reaction UTP + L-glutamine + ATP + H2O = CTP + L-glutamate + ADP + phosphate + 2 H(+). The enzyme catalyses L-glutamine + H2O = L-glutamate + NH4(+). It catalyses the reaction UTP + NH4(+) + ATP = CTP + ADP + phosphate + 2 H(+). It participates in pyrimidine metabolism; CTP biosynthesis via de novo pathway; CTP from UDP: step 2/2. Allosterically activated by GTP, when glutamine is the substrate; GTP has no effect on the reaction when ammonia is the substrate. The allosteric effector GTP functions by stabilizing the protein conformation that binds the tetrahedral intermediate(s) formed during glutamine hydrolysis. Inhibited by the product CTP, via allosteric rather than competitive inhibition. In terms of biological role, catalyzes the ATP-dependent amination of UTP to CTP with either L-glutamine or ammonia as the source of nitrogen. Regulates intracellular CTP levels through interactions with the four ribonucleotide triphosphates. In Gluconacetobacter diazotrophicus (strain ATCC 49037 / DSM 5601 / CCUG 37298 / CIP 103539 / LMG 7603 / PAl5), this protein is CTP synthase.